The following is a 600-amino-acid chain: Putative dehydrogenase XoxF (600 aa).

Residues M1–A21 form the signal peptide. Ca(2+) is bound by residues E192 and N276. D318 (proton acceptor) is an active-site residue.

The protein belongs to the bacterial PQQ dehydrogenase family. Pyrroloquinoline quinone serves as cofactor. Requires Ca(2+) as cofactor.

The chain is Putative dehydrogenase XoxF (xoxF) from Paracoccus denitrificans.